A 367-amino-acid chain; its full sequence is Glycerol dehydrogenase (367 aa).

Residues aspartate 37, glycine 94, lysine 95, threonine 116, and serine 119 each contribute to the NAD(+) site. Aspartate 121 is a glycerol binding site. NAD(+)-binding residues include serine 125, leucine 127, and tyrosine 131. Aspartate 171, histidine 254, and histidine 271 together coordinate Zn(2+). A glycerol-binding site is contributed by histidine 254.

Belongs to the iron-containing alcohol dehydrogenase family. Zn(2+) serves as cofactor.

The catalysed reaction is glycerol + NAD(+) = dihydroxyacetone + NADH + H(+). It participates in polyol metabolism; glycerol fermentation; glycerone phosphate from glycerol (oxidative route): step 1/2. Catalyzes the NAD-dependent oxidation of glycerol to dihydroxyacetone (glycerone). Allows microorganisms to utilize glycerol as a source of carbon under anaerobic conditions. The sequence is that of Glycerol dehydrogenase (gldA) from Escherichia coli O6:H1 (strain CFT073 / ATCC 700928 / UPEC).